We begin with the raw amino-acid sequence, 446 residues long: Tubulin beta-2 chain (446 aa).

Q11, E69, S138, G142, T143, G144, N204, and N226 together coordinate GTP. Mg(2+) is bound at residue E69.

This sequence belongs to the tubulin family. As to quaternary structure, dimer of alpha and beta chains. A typical microtubule is a hollow water-filled tube with an outer diameter of 25 nm and an inner diameter of 15 nM. Alpha-beta heterodimers associate head-to-tail to form protofilaments running lengthwise along the microtubule wall with the beta-tubulin subunit facing the microtubule plus end conferring a structural polarity. Microtubules usually have 13 protofilaments but different protofilament numbers can be found in some organisms and specialized cells. Requires Mg(2+) as cofactor.

Its subcellular location is the cytoplasm. It localises to the cytoskeleton. In terms of biological role, tubulin is the major constituent of microtubules, a cylinder consisting of laterally associated linear protofilaments composed of alpha- and beta-tubulin heterodimers. Microtubules grow by the addition of GTP-tubulin dimers to the microtubule end, where a stabilizing cap forms. Below the cap, tubulin dimers are in GDP-bound state, owing to GTPase activity of alpha-tubulin. The protein is Tubulin beta-2 chain (tub2) of Hypocrea rufa (Trichoderma viride).